Consider the following 1011-residue polypeptide: E3 ubiquitin-protein ligase mib1 (1011 aa).

The region spanning 6-74 (NNRVMVEGVG…AYDLRIMDSA (69 aa)) is the MIB/HERC2 1 domain. Residues 80–132 (HDGTMCDTCRQQPIIGIRWKCAECTNYDLCTVCYHGDKHHLRHRFYRITTPGS) form a ZZ-type zinc finger. Positions 85, 88, 100, 103, 109, 112, 118, and 122 each coordinate Zn(2+). Residues 143 to 221 (SKKITARGIF…MSDLKCVQDA (79 aa)) form the MIB/HERC2 2 domain. 9 ANK repeats span residues 430 to 460 (DLNE…DVNG), 463 to 492 (AGHT…DVEA), 496 to 525 (DGDR…DLNA), 529 to 558 (RRQT…HPSL), 562 to 591 (EGDT…DVTI), 595 to 627 (NGFN…IVDE), 631 to 661 (DGYT…NLDI), 665 to 694 (NQQT…KLDI), and 698 to 729 (DGDT…KVDT). 2 consecutive RING-type zinc fingers follow at residues 820-855 (CMVC…LLCK) and 867-902 (CVVC…VQCR). Positions 936–963 (QKDKDNTNVNADVQKLQQQLQDIKEQTM) form a coiled coil. The RING-type 3 zinc-finger motif lies at 964–997 (CPVCLDRLKNMIFMCGHGTCQLCGDRMSECPICR).

Its subcellular location is the cytoplasm. The protein resides in the cytoskeleton. It localises to the microtubule organizing center. It is found in the centrosome. The protein localises to the centriolar satellite. It carries out the reaction S-ubiquitinyl-[E2 ubiquitin-conjugating enzyme]-L-cysteine + [acceptor protein]-L-lysine = [E2 ubiquitin-conjugating enzyme]-L-cysteine + N(6)-ubiquitinyl-[acceptor protein]-L-lysine.. The protein operates within protein modification; protein ubiquitination. In terms of biological role, E3 ubiquitin-protein ligase that mediates ubiquitination of Delta receptors, which act as ligands of Notch proteins. Positively regulates the Delta-mediated Notch signaling by ubiquitinating the intracellular domain of Delta, leading to endocytosis of Delta receptors. This is E3 ubiquitin-protein ligase mib1 (mib1) from Xenopus laevis (African clawed frog).